Here is a 123-residue protein sequence, read N- to C-terminus: Large ribosomal subunit protein uL14c (123 aa).

Belongs to the universal ribosomal protein uL14 family. In terms of assembly, part of the 50S ribosomal subunit.

Its subcellular location is the plastid. The protein localises to the chloroplast. In terms of biological role, binds to 23S rRNA. The chain is Large ribosomal subunit protein uL14c from Sorghum bicolor (Sorghum).